We begin with the raw amino-acid sequence, 1268 residues long: uncharacterized protein (1268 aa).

The segment covering 191-206 (KIVSVKPSKSSQQVDV) has biased composition (low complexity). Disordered stretches follow at residues 191 to 235 (KIVS…SKKK) and 253 to 273 (NCRS…SKGC). Basic and acidic residues predominate over residues 223-235 (RKPEKSSQDSKKK). The CCHC-type zinc-finger motif lies at 239 to 256 (PTCFYCNKKGHYATNCRS). Residues 465 to 644 (EMGVIVPITY…KQVTFLGFVD (180 aa)) enclose the Reverse transcriptase domain. Residues 844–997 (VPEAPWKRIH…TPAECHFGRK (154 aa)) enclose the Integrase catalytic domain. Positions 1092 to 1268 (GDYSRSSVNP…RRERVRTTWR (177 aa)) are disordered. Composition is skewed to polar residues over residues 1127–1143 (VTSN…SRIT) and 1160–1169 (GSCSPTNNDV). Positions 1208–1221 (PSTSTGTPRGSTST) are enriched in low complexity. A compositionally biased stretch (polar residues) spans 1222 to 1249 (QLGQASTRNGSRYTASGRNPSCQGNRYS). The span at 1257–1268 (TARRERVRTTWR) shows a compositional bias: basic and acidic residues.

This is an uncharacterized protein from Caenorhabditis elegans.